Reading from the N-terminus, the 154-residue chain is Ascorbate-specific PTS system EIIA component (154 aa).

Positions 6 to 150 constitute a PTS EIIA type-2 domain; that stretch reads SLAENKSIRL…QEVLDLIDRT (145 aa). The Tele-phosphohistidine intermediate role is filled by His-68. A Phosphohistidine modification is found at His-68.

The protein localises to the cytoplasm. Functionally, the phosphoenolpyruvate-dependent sugar phosphotransferase system (sugar PTS), a major carbohydrate active transport system, catalyzes the phosphorylation of incoming sugar substrates concomitantly with their translocation across the cell membrane. The enzyme II UlaABC PTS system is involved in ascorbate transport. The sequence is that of Ascorbate-specific PTS system EIIA component (ulaC) from Shigella flexneri.